Here is a 347-residue protein sequence, read N- to C-terminus: NADH-quinone oxidoreductase subunit H (347 aa).

9 helical membrane-spanning segments follow: residues 13-33, 50-70, 82-102, 115-135, 161-181, 198-218, 248-268, 286-306, and 325-345; these read LIIA…VAYL, PNVV…KFVF, GVFL…WAVI, VGIL…IMGG, IGFV…TDIV, FLDW…ISAL, FLLF…LMTV, VPGI…FAMV, and VFLP…KVFG.

Belongs to the complex I subunit 1 family. In terms of assembly, NDH-1 is composed of 14 different subunits. Subunits NuoA, H, J, K, L, M, N constitute the membrane sector of the complex.

Its subcellular location is the cell inner membrane. The catalysed reaction is a quinone + NADH + 5 H(+)(in) = a quinol + NAD(+) + 4 H(+)(out). In terms of biological role, NDH-1 shuttles electrons from NADH, via FMN and iron-sulfur (Fe-S) centers, to quinones in the respiratory chain. The immediate electron acceptor for the enzyme in this species is believed to be ubiquinone. Couples the redox reaction to proton translocation (for every two electrons transferred, four hydrogen ions are translocated across the cytoplasmic membrane), and thus conserves the redox energy in a proton gradient. This subunit may bind ubiquinone. The sequence is that of NADH-quinone oxidoreductase subunit H from Brucella ovis (strain ATCC 25840 / 63/290 / NCTC 10512).